We begin with the raw amino-acid sequence, 63 residues long: Alpha-toxin CsE5 (63 aa).

An LCN-type CS-alpha/beta domain is found at 2–61; it reads KDGYPVDSGNCKYECLKDDYCNDLCLERKADKGYCYWGKVSCYCYGLPDNSPTKTSGKCN. Cystine bridges form between C12–C60, C16–C36, C22–C43, and C26–C45.

It belongs to the long (4 C-C) scorpion toxin superfamily. Sodium channel inhibitor family. Alpha subfamily. As to expression, expressed by the venom gland.

The protein resides in the secreted. Alpha toxins bind voltage-independently at site-3 of sodium channels (Nav) and inhibit the inactivation of the activated channels, thereby blocking neuronal transmission. The protein is Alpha-toxin CsE5 of Centruroides sculpturatus (Arizona bark scorpion).